An 881-amino-acid chain; its full sequence is Phosphoenolpyruvate carboxylase (881 aa).

Catalysis depends on residues H138 and K545.

This sequence belongs to the PEPCase type 1 family. Mg(2+) serves as cofactor.

The enzyme catalyses oxaloacetate + phosphate = phosphoenolpyruvate + hydrogencarbonate. In terms of biological role, forms oxaloacetate, a four-carbon dicarboxylic acid source for the tricarboxylic acid cycle. The protein is Phosphoenolpyruvate carboxylase of Shewanella oneidensis (strain ATCC 700550 / JCM 31522 / CIP 106686 / LMG 19005 / NCIMB 14063 / MR-1).